We begin with the raw amino-acid sequence, 330 residues long: Beta-hexosaminidase (330 aa).

Residues Asp62, Arg70, Arg130, and 160–161 (KH) each bind substrate. Residue His173 is the Proton donor/acceptor of the active site. The Nucleophile role is filled by Asp242.

This sequence belongs to the glycosyl hydrolase 3 family. NagZ subfamily. As to quaternary structure, monomer.

The protein resides in the cytoplasm. It carries out the reaction Hydrolysis of terminal non-reducing N-acetyl-D-hexosamine residues in N-acetyl-beta-D-hexosaminides.. Its pathway is cell wall biogenesis; peptidoglycan recycling. Functionally, plays a role in peptidoglycan recycling by cleaving the terminal beta-1,4-linked N-acetylglucosamine (GlcNAc) from peptide-linked peptidoglycan fragments, giving rise to free GlcNAc, anhydro-N-acetylmuramic acid and anhydro-N-acetylmuramic acid-linked peptides. Plays a role in beta-lactam antibiotic resistance via its role in generating anhydro-N-acetylmuramic acid-linked peptides; these peptides function as signaling molecules that induce high-level expression of the beta-lactamase AmpC. The chain is Beta-hexosaminidase from Vibrio cholerae serotype O1 (strain ATCC 39315 / El Tor Inaba N16961).